Consider the following 370-residue polypeptide: Putative agmatine deiminase (370 aa).

Catalysis depends on cysteine 361, which acts as the Amidino-cysteine intermediate.

Belongs to the agmatine deiminase family.

The catalysed reaction is agmatine + H2O = N-carbamoylputrescine + NH4(+). The protein is Putative agmatine deiminase of Shewanella baltica (strain OS223).